A 336-amino-acid polypeptide reads, in one-letter code: Acyl-CoA-binding domain-containing protein 4 (336 aa).

The helical; Signal-anchor transmembrane segment at 12–32 (AVIGLLFAFLVAKLISTVIAF) threads the bilayer. Positions 40–88 (TRSTPTSPSAADTPAAPAPPPASLDGGHGDTSDGSGSDSDSDWEGVEST) are disordered. Positions 42–54 (STPTSPSAADTPA) are enriched in low complexity. The segment covering 78–88 (SDSDWEGVEST) has biased composition (acidic residues). The region spanning 90–178 (LDEEFSAASA…VDELFPNWSM (89 aa)) is the ACB domain. Residues 120 to 124 (YGLYK), Lys142, Lys146, and Tyr165 each bind an acyl-CoA. An N-linked (GlcNAc...) asparagine glycan is attached at Asn175. The segment at 179 to 202 (GSSTKRKDEDTTVSASSSKGPMGP) is disordered. An N-linked (GlcNAc...) asparagine glycan is attached at Asn216. ANK repeat units lie at residues 251 to 280 (EGRT…DVNA) and 284 to 313 (EGQT…DVQI).

The protein belongs to the ACBP family. Highly expressed in leaves. Expressed at low levels in roots and seeds.

The protein localises to the endoplasmic reticulum membrane. Functionally, binds medium- and long-chain acyl-CoA esters with high affinity. Can interact in vitro with palmitoyl-CoA, linoleoyl-CoA and linolenoyl-CoA. Binds phosphatidic acid (PA) and phosphatidylcholine (PC) in vitro. May play a role in the biosynthesis of phospholipids. The chain is Acyl-CoA-binding domain-containing protein 4 from Oryza sativa subsp. japonica (Rice).